The primary structure comprises 338 residues: Lipoate-protein ligase A (338 aa).

The BPL/LPL catalytic domain maps to Pro-29–Val-216. ATP-binding positions include Arg-71, Gly-76–Phe-79, and Lys-134. Lys-134 is a (R)-lipoate binding site.

It belongs to the LplA family. As to quaternary structure, monomer.

It localises to the cytoplasm. The catalysed reaction is L-lysyl-[lipoyl-carrier protein] + (R)-lipoate + ATP = N(6)-[(R)-lipoyl]-L-lysyl-[lipoyl-carrier protein] + AMP + diphosphate + H(+). The protein operates within protein modification; protein lipoylation via exogenous pathway; protein N(6)-(lipoyl)lysine from lipoate: step 1/2. It participates in protein modification; protein lipoylation via exogenous pathway; protein N(6)-(lipoyl)lysine from lipoate: step 2/2. Its function is as follows. Catalyzes both the ATP-dependent activation of exogenously supplied lipoate to lipoyl-AMP and the transfer of the activated lipoyl onto the lipoyl domains of lipoate-dependent enzymes. In Klebsiella pneumoniae subsp. pneumoniae (strain ATCC 700721 / MGH 78578), this protein is Lipoate-protein ligase A.